The primary structure comprises 1444 residues: MTDTSVLDQWKASFFVEDFLEKKTITRMVTQINCEFEEVVPSSNPDSQIEVEEVSLYTHMDYNEVFTPVSCLEKCSALQNQNQDLFIDDKGILFVSSRKHLPTLPTLLSRLKLFLVKDPLLDFKGQIFTEANFSRECFSLQETLEAFVKEDFCMDKVNFCQEKLEDTICLNEPSSFLIEYEFLIPPSLKPEIDIPSLSELKELLNPVPEIINYVDEKEKLFERDLTNKHGIEDIGDIKFSSTEILTIQSQSEPEECSKPGELEMPLTPLFLTCQHSSVNSLRTELQTFPLSPVCKINLLTAEESANEYYMMWQLERCRSPLNPFLLTVPRIQEPHSQYSVTDLKKIFSVKEESLVINLEKAEWWKQAGLNLKMMETLEHLNTYLCHDNLSSNDTKIEIFLPTKVLQLESCLEHKSHSSPIALIDEKSTNAHLSLPQKSPSLAKEVPDLCFSDDYFSDKGAAKEEKPKNDQEPVNRIIQKKENNDHFELDCTGPSIKSPSSSIIKKASFEHGKKQENDLDLLSDFIMLRNKYKTCTSKTEVTNSDEKHDKEACSLTLQEESPIVHINKTLEEINQERGTDSVIEIQASDSQCQAFCLLEAAASPILKNLVSLCTLPTANWKFATVIFDQTRFLLKEQEKVVSDAVRQGTIDEREMTFKHAALLHLLVTIRDVLLTCSLDTALGYLSKAKDIYNSILGPYLGDIWRQLEIVQFIRGKKPETNYKIQELQCQILSWMQSQQQIKVLIIIRMDSDGEKHFLIKILNKIEGLTLTVLHSNERKDFLESEGVLRGTSSCVVVHNQYIGADFPWSNFSFVVEYNYVEDSCWTKHCKELNIPYMAFKVILPDTVLERSTLLDRFGGFLLEIQIPYVFFASEGLLNTPDILQLLESNYNISLVERGCSESLKLFGSSECYVVVTIDEHTAIILQDLEELNYEKASDNIIMRLMALSLQYRYCWIILYTKETLNSEYLLTEKTLHHLALIYAALVSFGLNSEELDVKLIIAPGVEATALIIRQIADHSLMTSKRDPHEWLDKSWLKVSPSEEEMYLLDFPCINPLVAQLMLNKGPSLHWILLATLCQLQELLPEVPEKVLKHFCSITSLFKIGSSSITKSPQISSPQENRNQISTLSSQSSASDLDSVIQEHNEYYQYLGLGETVQEDKTTILNDNSSIMELKEISSFLPPVTSYNQTSYWKDSSCKSNIGQNTPFLINIESRRPAYNSFLNHSDSESDVFSLGLTQMNCETIKSPTDTQKRVSVVPRFINSQKRRTHEAKGFINKDVSDPIFSLEGTQSPLHWNFKKNIWEQENHPFNLQYGAQQTACNKLYSQKGNLFTDQQKCLSDESEGLTCESSKDETFWRELPSVPSLDLFRASDSNANQKEFNSLYFYQRAGKSLGQKRHHESSFNSGDKESLTGFMCSQLPQFKKRRLAYEKVPGRVDGQTRLRFF.

Positions S1106–Q1117 are enriched in low complexity. Positions S1106–Q1129 are disordered.

It belongs to the XPF family. Highly divergent. As to quaternary structure, interacts with TEX11. Interacts with SPO16.

It localises to the chromosome. Its function is as follows. ATPase required during meiosis for the formation of crossover recombination intermediates. Binds DNA: preferentially binds to single-stranded DNA and DNA branched structures. Does not show nuclease activity in vitro, but shows ATPase activity, which is stimulated by the presence of single-stranded DNA. Plays a key role in homologous recombination and crossing-over in meiotic prophase I in male and female germ cells. Required for proper synaptonemal complex assembly and homologous chromosome pairing. Requiref for recruitment TEX11 and MSH4 to recombination intermediates. The sequence is that of Protein shortage in chiasmata 1 ortholog from Homo sapiens (Human).